The chain runs to 103 residues: Large ribosomal subunit protein bL21 (103 aa).

It belongs to the bacterial ribosomal protein bL21 family. As to quaternary structure, part of the 50S ribosomal subunit. Contacts protein L20.

Its function is as follows. This protein binds to 23S rRNA in the presence of protein L20. The sequence is that of Large ribosomal subunit protein bL21 from Borrelia garinii subsp. bavariensis (strain ATCC BAA-2496 / DSM 23469 / PBi) (Borreliella bavariensis).